Here is a 261-residue protein sequence, read N- to C-terminus: tRNA pseudouridine synthase A (261 aa).

The active-site Nucleophile is the aspartate 51. Substrate is bound at residue tyrosine 109.

This sequence belongs to the tRNA pseudouridine synthase TruA family. In terms of assembly, homodimer.

The enzyme catalyses uridine(38/39/40) in tRNA = pseudouridine(38/39/40) in tRNA. Formation of pseudouridine at positions 38, 39 and 40 in the anticodon stem and loop of transfer RNAs. The sequence is that of tRNA pseudouridine synthase A from Shewanella sp. (strain MR-7).